Here is a 115-residue protein sequence, read N- to C-terminus: Immunoglobulin kappa chain variable 12-41 (115 aa).

The first 20 residues, 1–20 (MSVLTQVLALLLLWLTGARC), serve as a signal peptide directing secretion. Residues 21–43 (DIQMTQSPASLSASVGETVTITC) are framework-1. Cysteines 43 and 108 form a disulfide. The complementarity-determining-1 stretch occupies residues 44-54 (RASGNIHNYLA). Residues 55 to 69 (WYQQKQGKSPQLLVY) form a framework-2 region. The segment at 70–76 (NAKTLAD) is complementarity-determining-2. The segment at 77-108 (GVPSRFSGSGSGTQYSLKINSLQPEDFGSYYC) is framework-3. The tract at residues 109-115 (QHFWSTP) is complementarity-determining-3.

This is Immunoglobulin kappa chain variable 12-41 from Mus musculus (Mouse).